Here is a 692-residue protein sequence, read N- to C-terminus: Glycine--tRNA ligase beta subunit (692 aa).

The protein belongs to the class-II aminoacyl-tRNA synthetase family. As to quaternary structure, tetramer of two alpha and two beta subunits.

The protein resides in the cytoplasm. The enzyme catalyses tRNA(Gly) + glycine + ATP = glycyl-tRNA(Gly) + AMP + diphosphate. The sequence is that of Glycine--tRNA ligase beta subunit from Hahella chejuensis (strain KCTC 2396).